A 393-amino-acid chain; its full sequence is S-adenosylmethionine synthase (393 aa).

Glu-9 serves as a coordination point for Mg(2+). His-15 lines the ATP pocket. Residue Glu-43 participates in K(+) binding. Positions 56 and 99 each coordinate L-methionine. Residues His-167–Lys-169, Ser-235–Phe-238, Asp-246, Arg-252–Lys-253, Ala-269, Lys-273, and Lys-277 each bind ATP. Asp-246 provides a ligand contact to L-methionine. Lys-277 is a binding site for L-methionine.

This sequence belongs to the AdoMet synthase family. Homotetramer. Requires Mn(2+) as cofactor. It depends on Mg(2+) as a cofactor. Co(2+) is required as a cofactor. K(+) serves as cofactor. Root.

Its subcellular location is the cytoplasm. It carries out the reaction L-methionine + ATP + H2O = S-adenosyl-L-methionine + phosphate + diphosphate. It functions in the pathway amino-acid biosynthesis; S-adenosyl-L-methionine biosynthesis; S-adenosyl-L-methionine from L-methionine: step 1/1. Functionally, catalyzes the formation of S-adenosylmethionine from methionine and ATP. The reaction comprises two steps that are both catalyzed by the same enzyme: formation of S-adenosylmethionine (AdoMet) and triphosphate, and subsequent hydrolysis of the triphosphate. In Pinus banksiana (Jack pine), this protein is S-adenosylmethionine synthase (METK).